The chain runs to 484 residues: tRNA sulfurtransferase (484 aa).

In terms of domain architecture, THUMP spans Q63–R167. Residues L185 to I186, K267, G289, and Q298 each bind ATP. C346 and C458 form a disulfide bridge. Positions I406–P484 constitute a Rhodanese domain. C458 acts as the Cysteine persulfide intermediate in catalysis.

The protein belongs to the ThiI family.

The protein localises to the cytoplasm. The enzyme catalyses [ThiI sulfur-carrier protein]-S-sulfanyl-L-cysteine + a uridine in tRNA + 2 reduced [2Fe-2S]-[ferredoxin] + ATP + H(+) = [ThiI sulfur-carrier protein]-L-cysteine + a 4-thiouridine in tRNA + 2 oxidized [2Fe-2S]-[ferredoxin] + AMP + diphosphate. It catalyses the reaction [ThiS sulfur-carrier protein]-C-terminal Gly-Gly-AMP + S-sulfanyl-L-cysteinyl-[cysteine desulfurase] + AH2 = [ThiS sulfur-carrier protein]-C-terminal-Gly-aminoethanethioate + L-cysteinyl-[cysteine desulfurase] + A + AMP + 2 H(+). It participates in cofactor biosynthesis; thiamine diphosphate biosynthesis. In terms of biological role, catalyzes the ATP-dependent transfer of a sulfur to tRNA to produce 4-thiouridine in position 8 of tRNAs, which functions as a near-UV photosensor. Also catalyzes the transfer of sulfur to the sulfur carrier protein ThiS, forming ThiS-thiocarboxylate. This is a step in the synthesis of thiazole, in the thiamine biosynthesis pathway. The sulfur is donated as persulfide by IscS. This Shewanella sp. (strain MR-7) protein is tRNA sulfurtransferase.